We begin with the raw amino-acid sequence, 140 residues long: Small ribosomal subunit protein bS6 (140 aa).

The interval 96-140 (VTGQSEMLKAEENRSERRERRDRPEHEGADSADSDDSDNSDNADE) is disordered. Residues 103-124 (LKAEENRSERRERRDRPEHEGA) show a composition bias toward basic and acidic residues. Residues 125-140 (DSADSDDSDNSDNADE) show a composition bias toward acidic residues.

It belongs to the bacterial ribosomal protein bS6 family.

Its function is as follows. Binds together with bS18 to 16S ribosomal RNA. This Pseudomonas fluorescens (strain SBW25) protein is Small ribosomal subunit protein bS6.